The chain runs to 339 residues: Glyceraldehyde-3-phosphate dehydrogenase (339 aa).

NAD(+) is bound by residues 13 to 14, Asp-35, and Lys-84; that span reads RI. D-glyceraldehyde 3-phosphate is bound by residues 156 to 158, Thr-187, 216 to 217, and Arg-239; these read SCT and TG. The active-site Nucleophile is Cys-157. Residue Asn-321 participates in NAD(+) binding.

The protein belongs to the glyceraldehyde-3-phosphate dehydrogenase family. As to quaternary structure, homotetramer.

Its subcellular location is the cytoplasm. It carries out the reaction D-glyceraldehyde 3-phosphate + phosphate + NAD(+) = (2R)-3-phospho-glyceroyl phosphate + NADH + H(+). Its pathway is carbohydrate degradation; glycolysis; pyruvate from D-glyceraldehyde 3-phosphate: step 1/5. The sequence is that of Glyceraldehyde-3-phosphate dehydrogenase from Onchocerca volvulus.